Here is a 371-residue protein sequence, read N- to C-terminus: N-acetyllactosaminide alpha-2,3-sialyltransferase (371 aa).

CMP-N-acetyl-beta-neuraminate is bound at residue glycine 255. Aspartate 258 serves as the catalytic Proton acceptor. Residues alanine 278–arginine 282, isoleucine 299–glutamate 300, and serine 322–glycine 323 contribute to the CMP-N-acetyl-beta-neuraminate site. The Proton donor role is filled by histidine 280.

The protein belongs to the glycosyltransferase 52 family. Homodimer.

The protein localises to the cell outer membrane. It carries out the reaction a beta-D-galactosyl-(1-&gt;4)-N-acetyl-beta-D-glucosaminyl derivative + CMP-N-acetyl-beta-neuraminate = an N-acetyl-alpha-neuraminyl-(2-&gt;3)-beta-D-galactosyl-(1-&gt;4)-N-acetyl-beta-D-glucosaminyl derivative + CMP + H(+). Its pathway is bacterial outer membrane biogenesis; lipooligosaccharide biosynthesis. Functionally, catalyzes the transfer of sialic acid from the substrate CMP-N-acetylneuraminate to the terminal galactose residue of the lacto-N-neotetraose branch of surface lipooligosaccharide (LOS), forming an alpha-2,3-sialyl linkage. Thus, functions in the sialylation of LOS, which plays a role in the evasion of the host immune response by protecting N.meningitidis from complement-mediated serum killing and from phagocytic killing by neutrophils. The chain is N-acetyllactosaminide alpha-2,3-sialyltransferase from Neisseria meningitidis serogroup A / serotype 4A (strain DSM 15465 / Z2491).